The chain runs to 112 residues: Large ribosomal subunit protein eL30 (112 aa).

The protein belongs to the eukaryotic ribosomal protein eL30 family. Expressed in roots and leaves.

The protein is Large ribosomal subunit protein eL30 of Triticum aestivum (Wheat).